The primary structure comprises 598 residues: Centrosomal protein of 70 kDa (598 aa).

The segment covering 16–38 has biased composition (polar residues); that stretch reads DSTKEPLSTVTSQAQDSSLSANR. The interval 16–43 is disordered; it reads DSTKEPLSTVTSQAQDSSLSANRPVTEK. Coiled coils occupy residues 99–210 and 255–317; these read TRQQ…EEDR and TYKG…NIKL. A TPR repeat occupies 484–517; the sequence is NGVYPRMNEVYARLGEMNNAVRNLQELLGLDSSS.

Directly interacts with tubulin-gamma; this interaction determines centrosomal localization.

The protein localises to the cytoplasm. The protein resides in the cytoskeleton. Its subcellular location is the microtubule organizing center. It localises to the centrosome. Plays a role in the organization of both preexisting and nascent microtubules in interphase cells. During mitosis, required for the organization and orientation of the mitotic spindle. This chain is Centrosomal protein of 70 kDa (Cep70), found in Rattus norvegicus (Rat).